The chain runs to 28 residues: Dermaseptin-2.2TR (28 aa).

In terms of tissue distribution, expressed by the skin glands.

It is found in the secreted. Functionally, has antimicrobial activity. The protein is Dermaseptin-2.2TR of Phyllomedusa trinitatis (Trinidad leaf frog).